Here is an 87-residue protein sequence, read N- to C-terminus: UPF0235 protein TGRD_618 (87 aa).

The protein belongs to the UPF0235 family.

The chain is UPF0235 protein TGRD_618 from Endomicrobium trichonymphae.